Here is a 187-residue protein sequence, read N- to C-terminus: Elongation factor P (187 aa).

This sequence belongs to the elongation factor P family.

The protein localises to the cytoplasm. It participates in protein biosynthesis; polypeptide chain elongation. Functionally, involved in peptide bond synthesis. Stimulates efficient translation and peptide-bond synthesis on native or reconstituted 70S ribosomes in vitro. Probably functions indirectly by altering the affinity of the ribosome for aminoacyl-tRNA, thus increasing their reactivity as acceptors for peptidyl transferase. In Corynebacterium efficiens (strain DSM 44549 / YS-314 / AJ 12310 / JCM 11189 / NBRC 100395), this protein is Elongation factor P.